A 237-amino-acid chain; its full sequence is Chaplin-B (237 aa).

Positions 1-26 (MRRVTRNGVLAVAASGALAVTMPAYA) are cleaved as a signal peptide. The 41-residue stretch at 42 to 82 (SPGLISGNTVQLPVDVPVDVCGNTVNVVGLLNPAAGNGCAD) folds into the Chaplin 1 domain. 2 disordered regions span residues 81–127 (ADSG…LSGN) and 148–216 (GIGN…TLAG). The span at 101–115 (GSATEATSGGAAAEG) shows a compositional bias: low complexity. Residues 120 to 160 (SPGVLSGNGVQLPVHLPVNVSGNSVNVVGIGNPAVGNESTN) enclose the Chaplin 2 domain. A compositionally biased stretch (pro residues) spans 169-178 (VRPPAEPEPS). The LPXTG sorting signal motif lies at 202 to 206 (LAHTG). Position 205 is a pentaglycyl murein peptidoglycan amidated threonine (Thr205). Residues 206-237 (GTDRTLPTLAGGAALVLGGTVLYRRFRPGSGD) constitute a propeptide, removed by sortase.

This sequence belongs to the chaplin family. Long chaplin subfamily.

It localises to the secreted. The protein resides in the cell wall. In terms of biological role, one of 8 partially redundant surface-active proteins required for efficient formation of aerial mycelium; the short chaplins assemble into a hydrophobic, amyloidal fibrillar surface layer that envelopes and protects aerial hyphae and spores, presumably anchored to the long chaplins. Chaplins have an overlapping function with the surface-active SapB peptide; chaplins are essential on minimal medium while on rich medium both chaplins and SapB are required for efficient aerial hyphae formation. The long chaplins (ChpA, ChpB, ChpC) are not absolutely necessary for short chaplin localization or rodlet formation, but probably play a role in initiating aerial hyphae development. Chaplins are also involved in cell attachment to a hydrophobic surface. The protein is Chaplin-B of Streptomyces coelicolor (strain ATCC BAA-471 / A3(2) / M145).